A 272-amino-acid polypeptide reads, in one-letter code: Cerberus (272 aa).

Residues 1–17 form the signal peptide; that stretch reads MHLLLVQLLVLLPLGKA. Cystine bridges form between Cys162–Cys209, Cys176–Cys223, Cys186–Cys239, and Cys190–Cys241. The CTCK domain maps to 162-246; sequence CRTVPFNQTI…EECQCMVKTE (85 aa). 2 N-linked (GlcNAc...) asparagine glycosylation sites follow: Asn168 and Asn222.

This sequence belongs to the DAN family. Forms monomers and predominantly dimers. N-glycosylated.

The protein localises to the secreted. Its function is as follows. Cytokine that may play a role in anterior neural induction and somite formation during embryogenesis in part, through a BMP-inhibitory mechanism. Can regulate Nodal signaling during gastrulation as well as the formation and patterning of the primitive streak. This is Cerberus (Cer1) from Mus musculus (Mouse).